A 64-amino-acid chain; its full sequence is Large ribosomal subunit protein bL32 (64 aa).

A disordered region spans residues 1 to 28 (MAVQKSRVTPSRRGQRRSHDALTAKKLS).

Belongs to the bacterial ribosomal protein bL32 family.

The polypeptide is Large ribosomal subunit protein bL32 (rpmF) (Xylella fastidiosa (strain 9a5c)).